The sequence spans 139 residues: Arsenate reductase (139 aa).

Catalysis depends on nucleophile residues C10, C82, and C89. Intrachain disulfides connect C10–C82 and C82–C89.

This sequence belongs to the low molecular weight phosphotyrosine protein phosphatase family. Thioredoxin-coupled ArsC subfamily.

It localises to the cytoplasm. The enzyme catalyses arsenate + [thioredoxin]-dithiol + H(+) = arsenite + [thioredoxin]-disulfide + H2O. In terms of biological role, catalyzes the reduction of arsenate [As(V)] to arsenite [As(III)]. The sequence is that of Arsenate reductase from Shouchella clausii (strain KSM-K16) (Alkalihalobacillus clausii).